Here is a 416-residue protein sequence, read N- to C-terminus: Enolase (416 aa).

Residue Q156 participates in (2R)-2-phosphoglycerate binding. Catalysis depends on E200, which acts as the Proton donor. Mg(2+) is bound by residues D236, E281, and D308. (2R)-2-phosphoglycerate-binding residues include K333, R362, S363, and K384. The active-site Proton acceptor is the K333.

Belongs to the enolase family. The cofactor is Mg(2+).

Its subcellular location is the cytoplasm. The protein resides in the secreted. The protein localises to the cell surface. It catalyses the reaction (2R)-2-phosphoglycerate = phosphoenolpyruvate + H2O. It functions in the pathway carbohydrate degradation; glycolysis; pyruvate from D-glyceraldehyde 3-phosphate: step 4/5. In terms of biological role, catalyzes the reversible conversion of 2-phosphoglycerate (2-PG) into phosphoenolpyruvate (PEP). It is essential for the degradation of carbohydrates via glycolysis. The polypeptide is Enolase (Methanothermobacter thermautotrophicus (strain ATCC 29096 / DSM 1053 / JCM 10044 / NBRC 100330 / Delta H) (Methanobacterium thermoautotrophicum)).